Consider the following 174-residue polypeptide: Protein SHI RELATED SEQUENCE 3 (174 aa).

Cys-9, Cys-12, Cys-20, Cys-25, Cys-29, and Cys-36 together coordinate Zn(2+). Positions 9–36 form a DNA-binding region, zn(2)-C6 fungal-type; degenerate; sequence CEDCGNQAKKDCVYMRCRTCCKSKAFHC. Residues 110 to 113 carry the Required for homo- and heterodimerization motif; it reads IGGH.

This sequence belongs to the SHI protein family.

The protein resides in the nucleus. Its function is as follows. Transcription activator that binds DNA on 5'-ACTCTAC-3' and promotes auxin homeostasis-regulating gene expression (e.g. YUC genes), as well as genes affecting stamen development, cell expansion and timing of flowering. Synergistically with other SHI-related proteins, regulates gynoecium, stamen and leaf development in a dose-dependent manner, controlling apical-basal patterning. Promotes style and stigma formation, and influences vascular development during gynoecium development. May also have a role in the formation and/or maintenance of the shoot apical meristem (SAM). The sequence is that of Protein SHI RELATED SEQUENCE 3 (SRS3) from Arabidopsis thaliana (Mouse-ear cress).